The following is a 269-amino-acid chain: Type II methyltransferase M2.LlaDCHI (269 aa).

Belongs to the N(4)/N(6)-methyltransferase family.

It carries out the reaction a 2'-deoxyadenosine in DNA + S-adenosyl-L-methionine = an N(6)-methyl-2'-deoxyadenosine in DNA + S-adenosyl-L-homocysteine + H(+). A beta subtype methylase, recognizes the double-stranded sequence 5'-GATC-3', methylates A-2 on both strands, and protects the DNA from cleavage by the LlaDCHI endonuclease. The chain is Type II methyltransferase M2.LlaDCHI from Lactococcus lactis subsp. cremoris (Streptococcus cremoris).